The following is a 281-amino-acid chain: Nucleotide-binding protein Daro_0070 (281 aa).

Residue 8–15 coordinates ATP; it reads GLSGSGKS. Residue 57–60 coordinates GTP; it reads DARS.

The protein belongs to the RapZ-like family.

In terms of biological role, displays ATPase and GTPase activities. The sequence is that of Nucleotide-binding protein Daro_0070 from Dechloromonas aromatica (strain RCB).